Here is a 423-residue protein sequence, read N- to C-terminus: NADH-quinone oxidoreductase subunit F (423 aa).

Residue 54-63 (GRGGAGFSTG) coordinates NAD(+). 166 to 213 (GAGAYICGEETALLESLEGKKGMPRLKPPFPAGFGLYGCPTTINNVES) provides a ligand contact to FMN. [4Fe-4S] cluster is bound by residues Cys344, Cys347, Cys350, and Cys390.

It belongs to the complex I 51 kDa subunit family. FMN serves as cofactor. Requires [4Fe-4S] cluster as cofactor.

The catalysed reaction is a quinone + NADH + 5 H(+)(in) = a quinol + NAD(+) + 4 H(+)(out). Functionally, NDH-1 shuttles electrons from NADH, via FMN and iron-sulfur (Fe-S) centers, to quinones in the respiratory chain. Couples the redox reaction to proton translocation (for every two electrons transferred, four hydrogen ions are translocated across the cytoplasmic membrane), and thus conserves the redox energy in a proton gradient. In Rickettsia akari (strain Hartford), this protein is NADH-quinone oxidoreductase subunit F (nuoF).